The sequence spans 240 residues: Ubiquitin domain-containing protein 2 (240 aa).

Residues 1–48 (MGGCVGSHHDSSGSLNENSDGTGVALGRNQPLKREKPKWKSDYPMTDG) are disordered. Residues 12–21 (SGSLNENSDG) are compositionally biased toward polar residues. Positions 32 to 41 (LKREKPKWKS) are enriched in basic and acidic residues. In terms of domain architecture, Ubiquitin-like spans 152–227 (CQLRLRLSTG…VQVIVSQPPT (76 aa)).

The protein localises to the cytoplasm. The chain is Ubiquitin domain-containing protein 2 (ubtd2) from Danio rerio (Zebrafish).